The chain runs to 944 residues: Isoleucine--tRNA ligase (944 aa).

A 'HIGH' region motif is present at residues 58 to 68 (PYANGDIHIGH). Glu-568 is a binding site for L-isoleucyl-5'-AMP. The short motif at 609-613 (KMSKS) is the 'KMSKS' region element. Position 612 (Lys-612) interacts with ATP. The Zn(2+) site is built by Cys-907, Cys-910, Cys-927, and Cys-930.

The protein belongs to the class-I aminoacyl-tRNA synthetase family. IleS type 1 subfamily. In terms of assembly, monomer. The cofactor is Zn(2+).

Its subcellular location is the cytoplasm. The catalysed reaction is tRNA(Ile) + L-isoleucine + ATP = L-isoleucyl-tRNA(Ile) + AMP + diphosphate. In terms of biological role, catalyzes the attachment of isoleucine to tRNA(Ile). As IleRS can inadvertently accommodate and process structurally similar amino acids such as valine, to avoid such errors it has two additional distinct tRNA(Ile)-dependent editing activities. One activity is designated as 'pretransfer' editing and involves the hydrolysis of activated Val-AMP. The other activity is designated 'posttransfer' editing and involves deacylation of mischarged Val-tRNA(Ile). This chain is Isoleucine--tRNA ligase, found in Psychromonas ingrahamii (strain DSM 17664 / CCUG 51855 / 37).